Consider the following 225-residue polypeptide: Probable GTP-binding protein EngB (225 aa).

The EngB-type G domain occupies 40–224; sequence GPPEVAFAGR…RAAIVHAVTA (185 aa). GTP is bound by residues 48 to 55, 75 to 79, 102 to 105, 169 to 172, and 203 to 205; these read GRSNVGKS, GRTQE, DMPG, TKAD, and TSS. The Mg(2+) site is built by S55 and T77.

Belongs to the TRAFAC class TrmE-Era-EngA-EngB-Septin-like GTPase superfamily. EngB GTPase family. Mg(2+) serves as cofactor.

In terms of biological role, necessary for normal cell division and for the maintenance of normal septation. The sequence is that of Probable GTP-binding protein EngB from Chelativorans sp. (strain BNC1).